Here is a 350-residue protein sequence, read N- to C-terminus: Ion-translocating oxidoreductase complex subunit D (350 aa).

Transmembrane regions (helical) follow at residues 36 to 56 (CYFFGWGTLIQIALAIAIAVA), 89 to 109 (IPALAPWWIAAIGVIFAILVV), and 124 to 144 (AMAAYVMLLISFPMQMTTWVA). Thr-185 is modified (FMN phosphoryl threonine). 5 helical membrane passes run 212-232 (GFGIGWALINLAYLAGGLVML), 239-259 (WQISTAILASLFVCASIGYLL), 265-285 (MGPLLHLFSGATMLAAFFIAT), 298-318 (LIFGSLIGLLVYLIRSFCGYP), and 319-339 (DAFAFAVLLANLCAPFIDYYV).

The protein belongs to the NqrB/RnfD family. The complex is composed of six subunits: RnfA, RnfB, RnfC, RnfD, RnfE and RnfG. FMN serves as cofactor.

It localises to the cell inner membrane. Its function is as follows. Part of a membrane-bound complex that couples electron transfer with translocation of ions across the membrane. In Shewanella loihica (strain ATCC BAA-1088 / PV-4), this protein is Ion-translocating oxidoreductase complex subunit D.